Reading from the N-terminus, the 806-residue chain is Transitional endoplasmic reticulum ATPase (806 aa).

Ala-2 carries the N-acetylalanine modification. A phosphoserine mark is found at Ser-3 and Ser-7. A Glycyl lysine isopeptide (Lys-Gly) (interchain with G-Cter in SUMO2) cross-link involves residue Lys-8. At Ser-13 the chain carries Phosphoserine. A Glycyl lysine isopeptide (Lys-Gly) (interchain with G-Cter in SUMO2) cross-link involves residue Lys-18. Position 37 is a phosphoserine (Ser-37). An ATP-binding site is contributed by 247–253; it reads PGTGKTL. Position 315 is an N6,N6,N6-trimethyllysine; by VCPKMT (Lys-315). The ATP site is built by Asn-348 and His-384. The residue at position 436 (Thr-436) is a Phosphothreonine. Position 462 is a phosphoserine (Ser-462). Lys-502 and Lys-505 each carry N6-acetyllysine. 521-526 is a binding site for ATP; the sequence is GCGKTL. Residue Lys-668 is modified to N6-acetyllysine; alternate. At Lys-668 the chain carries N6-succinyllysine; alternate. The residue at position 702 (Ser-702) is a Phosphoserine. The interval 708 to 727 is disordered; that stretch reads RRERERQTNPSAMEVEEDDP. Lys-754 is subject to N6-acetyllysine. Residues 768–806 are disordered; it reads FGSFRFPSGNQGGAGPSQGSGGGTGGNVYTEDNDDDLYG. Residues Ser-770, Ser-775, and Ser-787 each carry the phosphoserine modification. Gly residues predominate over residues 777 to 793; it reads NQGGAGPSQGSGGGTGG. Positions 797–806 are interaction with UBXN6; that stretch reads TEDNDDDLYG. The PIM motif signature appears at 802–806; that stretch reads DDLYG. Tyr-805 carries the phosphotyrosine modification.

Belongs to the AAA ATPase family. Homohexamer. Forms a ring-shaped particle of 12.5 nm diameter, that displays 6-fold radial symmetry. Part of a ternary complex containing STX5A, NSFL1C and VCP. NSFL1C forms a homotrimer that binds to one end of a VCP homohexamer. The complex binds to membranes enriched in phosphatidylethanolamine-containing lipids and promotes Golgi membrane fusion. Binds to a heterodimer of NPLOC4 and UFD1, binding to this heterodimer inhibits Golgi-membrane fusion. Interaction with VCIP135 leads to dissociation of the complex via ATP hydrolysis by VCP. Part of a ternary complex containing NPLOC4, UFD1 and VCP. Interacts with NSFL1C-like protein p37; the complex has membrane fusion activity and is required for Golgi and endoplasmic reticulum biogenesis. Interacts with SELENOS and SYVN1, as well as with DERL1 (via SHP-box motif), DERL2 and DERL3; which probably transfer misfolded proteins from the ER to VCP. Interacts with SVIP and DERL1. Component of a complex required to couple retrotranslocation, ubiquitination and deglycosylation composed of NGLY1, SAKS1, AMFR, VCP and RAD23B. Part of a complex composed of STUB1/CHIP, VCP/p97, CHRNA3, and UBXN2A that modulates the ubiquitination and endoplasmic reticulum-associated degradation (ERAD) of CHRNA3. Within the complex UBXN2A acts as a scaffold protein required for the interaction of CHRNA3 with VCP/p97, this interaction also inhibits CHRNA3 ubiquitination by STUB1/CHIP and subsequently ERAD. Interacts with UBXN2A (via UBX domain); the interaction is required for the interaction of CHRNA3 in the STUB1-VCP-UBXN2A complex. Directly interacts with UBXN4 and RNF19A. Interacts with CASR. Interacts with UBE4B and YOD1. Interacts with clathrin. Interacts with RNF103. Interacts with TRIM13 and TRIM21. Component of a VCP/p97-AMFR/gp78 complex that participates in the final step of the endoplasmic reticulum-associated degradation (ERAD) of HMGCR. Interacts directly with AMFR/gp78 (via its VIM). Interacts with RHBDD1 (via C-terminal domain). Interacts with SPRTN; leading to recruitment to stalled replication forks. Interacts with WASHC5. Interacts with UBOX5. Interacts (via N-terminus) with UBXN7, UBXN8, and probably several other UBX domain-containing proteins (via UBX domains); the interactions are mutually exclusive with VIM-dependent interactions such as those with AMFR and SELENOS. Forms a complex with UBQLN1 and UBXN4. Interacts (via the PIM motif) with RNF31 (via the PUB domain). Interacts with RIGI and RNF125; interaction takes place when RIGI is ubiquitinated via 'Lys-63'-linked ubiquitin on its CARD domains, leading to recruit RNF125 and promote ubiquitination and degradation of RIGI. Interacts with BAG6. Interacts with UBXN10. Interacts with UBXN6; the interaction with UBXN6 is direct and competitive with UFD1. Forms a ternary complex with CAV1 and UBXN6. Interacts with PLAA, UBXN6 and YOD1; may form a complex involved in macroautophagy. Interacts with ANKZF1. Interacts with ubiquitin-binding protein FAF1. Interacts with ZFAND2B (via VIM motif); the interaction is direct. Interacts with ZFAND1 (via its ubiquitin-like region); this interaction occurs in an arsenite-dependent manner. Interacts with CCDC47. Interacts with LMBR1L and UBAC2. Interacts with ATXN3. Interacts with TEX264; bridging VCP to covalent DNA-protein cross-links (DPCs). In terms of processing, ISGylated. Post-translationally, methylation at Lys-315 catalyzed by VCPKMT is increased in the presence of ASPSCR1. Lys-315 methylation may decrease ATPase activity. Phosphorylated by tyrosine kinases in response to T-cell antigen receptor activation. Phosphorylated in mitotic cells.

It is found in the cytoplasm. The protein resides in the cytosol. It localises to the endoplasmic reticulum. Its subcellular location is the nucleus. The protein localises to the stress granule. The enzyme catalyses ATP + H2O = ADP + phosphate + H(+). In terms of biological role, necessary for the fragmentation of Golgi stacks during mitosis and for their reassembly after mitosis. Involved in the formation of the transitional endoplasmic reticulum (tER). The transfer of membranes from the endoplasmic reticulum to the Golgi apparatus occurs via 50-70 nm transition vesicles which derive from part-rough, part-smooth transitional elements of the endoplasmic reticulum (tER). Vesicle budding from the tER is an ATP-dependent process. The ternary complex containing UFD1, VCP and NPLOC4 binds ubiquitinated proteins and is necessary for the export of misfolded proteins from the ER to the cytoplasm, where they are degraded by the proteasome. The NPLOC4-UFD1-VCP complex regulates spindle disassembly at the end of mitosis and is necessary for the formation of a closed nuclear envelope. Regulates E3 ubiquitin-protein ligase activity of RNF19A. Component of the VCP/p97-AMFR/gp78 complex that participates in the final step of the sterol-mediated ubiquitination and endoplasmic reticulum-associated degradation (ERAD) of HMGCR. Mediates the endoplasmic reticulum-associated degradation of CHRNA3 in cortical neurons as part of the STUB1-VCP-UBXN2A complex. Involved in endoplasmic reticulum stress-induced pre-emptive quality control, a mechanism that selectively attenuates the translocation of newly synthesized proteins into the endoplasmic reticulum and reroutes them to the cytosol for proteasomal degradation. Involved in clearance process by mediating G3BP1 extraction from stress granules. Also involved in DNA damage response: recruited to double-strand breaks (DSBs) sites in a RNF8- and RNF168-dependent manner and promotes the recruitment of TP53BP1 at DNA damage sites. Recruited to stalled replication forks by SPRTN: may act by mediating extraction of DNA polymerase eta (POLH) to prevent excessive translesion DNA synthesis and limit the incidence of mutations induced by DNA damage. Together with SPRTN metalloprotease, involved in the repair of covalent DNA-protein cross-links (DPCs) during DNA synthesis. Involved in interstrand cross-link repair in response to replication stress by mediating unloading of the ubiquitinated CMG helicase complex. Mediates extraction of PARP1 trapped to chromatin: recognizes and binds ubiquitinated PARP1 and promotes its removal. Required for cytoplasmic retrotranslocation of stressed/damaged mitochondrial outer-membrane proteins and their subsequent proteasomal degradation. Essential for the maturation of ubiquitin-containing autophagosomes and the clearance of ubiquitinated protein by autophagy. Acts as a negative regulator of type I interferon production by interacting with RIGI: interaction takes place when RIGI is ubiquitinated via 'Lys-63'-linked ubiquitin on its CARD domains, leading to recruit RNF125 and promote ubiquitination and degradation of RIGI. May play a role in the ubiquitin-dependent sorting of membrane proteins to lysosomes where they undergo degradation. May more particularly play a role in caveolins sorting in cells. By controlling the steady-state expression of the IGF1R receptor, indirectly regulates the insulin-like growth factor receptor signaling pathway. This Bos taurus (Bovine) protein is Transitional endoplasmic reticulum ATPase (VCP).